Here is a 699-residue protein sequence, read N- to C-terminus: Elongation factor G (699 aa).

The region spanning 8-283 is the tr-type G domain; that stretch reads EHIRNIGICA…AVVDFLPSPI (276 aa). GTP contacts are provided by residues 17–24, 81–85, and 135–138; these read AHIDAGKT, DTPGH, and NKMD.

Belongs to the TRAFAC class translation factor GTPase superfamily. Classic translation factor GTPase family. EF-G/EF-2 subfamily.

It is found in the cytoplasm. Functionally, catalyzes the GTP-dependent ribosomal translocation step during translation elongation. During this step, the ribosome changes from the pre-translocational (PRE) to the post-translocational (POST) state as the newly formed A-site-bound peptidyl-tRNA and P-site-bound deacylated tRNA move to the P and E sites, respectively. Catalyzes the coordinated movement of the two tRNA molecules, the mRNA and conformational changes in the ribosome. This is Elongation factor G from Rickettsia helvetica.